Here is a 460-residue protein sequence, read N- to C-terminus: Elongation factor 1-alpha (460 aa).

Glycine 2 bears the N,N,N-trimethylglycine mark. Lysine 3 carries the post-translational modification N6,N6-dimethyllysine; alternate. Lysine 3 carries the N6-methyllysine; alternate modification. The tr-type G domain maps to 6–241; sequence KTHINVVVIG…DSIEPPKRPT (236 aa). A G1 region spans residues 15–22; that stretch reads GHVDSGKS. 15–22 serves as a coordination point for GTP; the sequence is GHVDSGKS. Positions 71 to 75 are G2; it reads GITID. The residue at position 80 (lysine 80) is an N6,N6,N6-trimethyllysine. Residues 92 to 95 are G3; it reads DAPG. GTP-binding positions include 92–96 and 154–157; these read DAPGH and NKMD. A G4 region spans residues 154 to 157; sequence NKMD. The segment at 193-195 is G5; it reads SGF. Residue lysine 317 is modified to N6,N6-dimethyllysine; alternate. Position 317 is an N6-methyllysine; alternate (lysine 317). An N6-methyllysine modification is found at lysine 391.

It belongs to the TRAFAC class translation factor GTPase superfamily. Classic translation factor GTPase family. EF-Tu/EF-1A subfamily.

The protein localises to the cytoplasm. Its function is as follows. This protein promotes the GTP-dependent binding of aminoacyl-tRNA to the A-site of ribosomes during protein biosynthesis. The protein is Elongation factor 1-alpha (tef1) of Hypocrea jecorina (Trichoderma reesei).